The sequence spans 314 residues: Olfactory receptor 5G9 (314 aa).

Over 1 to 25 the chain is Extracellular; that stretch reads MADENYTRITEFIFIGLRYHPNLQV. N5 carries N-linked (GlcNAc...) asparagine glycosylation. The helical transmembrane segment at 26–46 threads the bilayer; that stretch reads FLFLLFLLFYLVTMTGNLGMI. Residues 47-54 are Cytoplasmic-facing; it reads ILIRVDSR. The helical transmembrane segment at 55 to 75 threads the bilayer; the sequence is LHTPMYFFLSHLSFVDICFSS. Topologically, residues 76 to 99 are extracellular; it reads VVAPKMLTDFFADKKAISFLGCVL. An intrachain disulfide couples C97 to C189. A helical membrane pass occupies residues 100–120; sequence QQWFFGFFVAIECLLLASMAY. Residues 121–133 lie on the Cytoplasmic side of the membrane; sequence DRYVAICNPLLYS. A helical membrane pass occupies residues 134-154; sequence VAMSQRLCIQLVIGPYAVGFF. The Extracellular segment spans residues 155 to 196; the sequence is NTMTHTTAAFRLPFCGSNIINHFFCDMSPILSLICADIRINK. Residues 197 to 217 form a helical membrane-spanning segment; it reads LLVFIVAGAVLIVSSTTIIVS. The Cytoplasmic portion of the chain corresponds to 218-237; the sequence is YFHILIAILRIRSAEGRRKA. Residues 238–258 traverse the membrane as a helical segment; it reads FSTCSSHVTAVSILYGTLFFI. At 259–271 the chain is on the extracellular side; that stretch reads YVRPSAISSLDLN. Residues 272–292 form a helical membrane-spanning segment; sequence KVVSVFYTAVIPMLNPLIYSL. At 293-314 the chain is on the cytoplasmic side; the sequence is RNKEVKSAMGRTVAKAKVFLKN.

It belongs to the G-protein coupled receptor 1 family.

It is found in the cell membrane. Its function is as follows. Potential odorant receptor. In Mus musculus (Mouse), this protein is Olfactory receptor 5G9.